The primary structure comprises 259 residues: Acetylglutamate kinase (259 aa).

Residues 46-47, arginine 68, and asparagine 162 contribute to the substrate site; that span reads GG.

Belongs to the acetylglutamate kinase family. ArgB subfamily.

It is found in the cytoplasm. It carries out the reaction N-acetyl-L-glutamate + ATP = N-acetyl-L-glutamyl 5-phosphate + ADP. It participates in amino-acid biosynthesis; L-arginine biosynthesis; N(2)-acetyl-L-ornithine from L-glutamate: step 2/4. Functionally, catalyzes the ATP-dependent phosphorylation of N-acetyl-L-glutamate. The sequence is that of Acetylglutamate kinase from Roseiflexus castenholzii (strain DSM 13941 / HLO8).